We begin with the raw amino-acid sequence, 186 residues long: UPF0200 protein Mbar_A0975 (186 aa).

8 to 15 (GMPASGKS) contributes to the ATP binding site.

Belongs to the UPF0200 family.

The chain is UPF0200 protein Mbar_A0975 from Methanosarcina barkeri (strain Fusaro / DSM 804).